The sequence spans 170 residues: Allophycocyanin subunit beta-18 (170 aa).

At asparagine 74 the chain carries N4-methylasparagine. Cysteine 84 contributes to the (2R,3E)-phycocyanobilin binding site.

The protein belongs to the phycobiliprotein family. As to quaternary structure, heterodimer of an alpha and a beta chain. Contains one covalently linked bilin chromophore.

The protein resides in the plastid. Its subcellular location is the chloroplast thylakoid membrane. Light-harvesting photosynthetic bile pigment-protein from the phycobiliprotein complex. Allophycocyanin has a maximum absorption at approximately 650 nanometers. The chain is Allophycocyanin subunit beta-18 (apcF) from Cyanidium caldarium (Red alga).